We begin with the raw amino-acid sequence, 406 residues long: Argininosuccinate synthase (406 aa).

ATP is bound by residues 13–21 and A40; that span reads AYSGGLDTS. The L-citrulline site is built by Y91 and S96. G121 provides a ligand contact to ATP. The L-aspartate site is built by T123, N127, and D128. N127 serves as a coordination point for L-citrulline. Residues R131, S182, S191, E267, and Y279 each contribute to the L-citrulline site.

The protein belongs to the argininosuccinate synthase family. Type 1 subfamily. In terms of assembly, homotetramer.

Its subcellular location is the cytoplasm. The enzyme catalyses L-citrulline + L-aspartate + ATP = 2-(N(omega)-L-arginino)succinate + AMP + diphosphate + H(+). Its pathway is amino-acid biosynthesis; L-arginine biosynthesis; L-arginine from L-ornithine and carbamoyl phosphate: step 2/3. The sequence is that of Argininosuccinate synthase from Brucella abortus (strain S19).